A 161-amino-acid polypeptide reads, in one-letter code: Putative pre-16S rRNA nuclease (161 aa).

The protein belongs to the YqgF nuclease family.

Its subcellular location is the cytoplasm. In terms of biological role, could be a nuclease involved in processing of the 5'-end of pre-16S rRNA. The polypeptide is Putative pre-16S rRNA nuclease (Methylocella silvestris (strain DSM 15510 / CIP 108128 / LMG 27833 / NCIMB 13906 / BL2)).